We begin with the raw amino-acid sequence, 354 residues long: Uroporphyrinogen decarboxylase (354 aa).

Substrate-binding positions include 27-31 (RQAGR), aspartate 77, tyrosine 154, threonine 209, and histidine 327.

This sequence belongs to the uroporphyrinogen decarboxylase family. As to quaternary structure, homodimer.

The protein resides in the cytoplasm. The catalysed reaction is uroporphyrinogen III + 4 H(+) = coproporphyrinogen III + 4 CO2. It functions in the pathway porphyrin-containing compound metabolism; protoporphyrin-IX biosynthesis; coproporphyrinogen-III from 5-aminolevulinate: step 4/4. Its function is as follows. Catalyzes the decarboxylation of four acetate groups of uroporphyrinogen-III to yield coproporphyrinogen-III. This Histophilus somni (strain 2336) (Haemophilus somnus) protein is Uroporphyrinogen decarboxylase.